The sequence spans 328 residues: Apoptosis facilitator Bcl-2-like protein 14 (328 aa).

Phosphoserine is present on S44. Residues 213 to 227 (IVELLKFSGDQLGRE) carry the BH3 motif. The BH2 signature appears at 309-316 (WVQQNGGW).

Belongs to the Bcl-2 family. Post-translationally, phosphorylated by MELK, leading to inhibit its pro-apoptotic function.

The protein resides in the cytoplasm. In terms of biological role, plays a role in apoptosis. In Mus musculus (Mouse), this protein is Apoptosis facilitator Bcl-2-like protein 14 (Bcl2l14).